The primary structure comprises 418 residues: Tektin-1 (418 aa).

Coiled-coil stretches lie at residues 21 to 107 (KNQY…TLKE), 134 to 177 (HELI…DLKD), 266 to 308 (NGLK…DQEG), and 333 to 384 (AQYR…NTIY).

It belongs to the tektin family. As to quaternary structure, microtubule inner protein component of sperm flagellar doublet microtubules. Ubiquitinated, leading to its degradation. Deubiquitinated by USP16, promoting its stability. As to expression, predominantly expressed in testis. Expressed in airway epithelial cells.

The protein resides in the cytoplasm. It localises to the cytoskeleton. It is found in the cilium axoneme. Its subcellular location is the flagellum axoneme. Its function is as follows. Microtubule inner protein (MIP) part of the dynein-decorated doublet microtubules (DMTs) in cilia and flagellar axoneme. Forms filamentous polymers in the walls of ciliary and flagellar microtubules. The protein is Tektin-1 (TEKT1) of Homo sapiens (Human).